Reading from the N-terminus, the 389-residue chain is SH3 and F-BAR domain-containing protein DDB_G0274695 (389 aa).

The 256-residue stretch at 3 to 258 (EQFKDNFWGP…VITQIDKLED (256 aa)) folds into the F-BAR domain. The stretch at 119-192 (KLNKERKDME…QDYRDSVNKL (74 aa)) forms a coiled coil. Positions 300–328 (LTSSVSSNSLTSSYNSATTTPTPAPRSTP) are enriched in low complexity. The disordered stretch occupies residues 300-329 (LTSSVSSNSLTSSYNSATTTPTPAPRSTPI). The 58-residue stretch at 332–389 (SKKKQAKALYDYVGSDATELDFFAGDIITILDEDESGWFRGELGDRIGLYPSNYCEPI) folds into the SH3 domain.

This Dictyostelium discoideum (Social amoeba) protein is SH3 and F-BAR domain-containing protein DDB_G0274695.